The sequence spans 202 residues: LexA repressor (202 aa).

The segment at residues 28 to 48 is a DNA-binding region (H-T-H motif); that stretch reads QQEIARAFGFRSLGTVRNYLV. Residues Ser-120 and Lys-157 each act as for autocatalytic cleavage activity in the active site.

Belongs to the peptidase S24 family. Homodimer.

It catalyses the reaction Hydrolysis of Ala-|-Gly bond in repressor LexA.. In terms of biological role, represses a number of genes involved in the response to DNA damage (SOS response), including recA and lexA. In the presence of single-stranded DNA, RecA interacts with LexA causing an autocatalytic cleavage which disrupts the DNA-binding part of LexA, leading to derepression of the SOS regulon and eventually DNA repair. The protein is LexA repressor of Syntrophotalea carbinolica (strain DSM 2380 / NBRC 103641 / GraBd1) (Pelobacter carbinolicus).